Consider the following 100-residue polypeptide: Aspartyl/glutamyl-tRNA(Asn/Gln) amidotransferase subunit C (100 aa).

This sequence belongs to the GatC family. Heterotrimer of A, B and C subunits.

The catalysed reaction is L-glutamyl-tRNA(Gln) + L-glutamine + ATP + H2O = L-glutaminyl-tRNA(Gln) + L-glutamate + ADP + phosphate + H(+). It carries out the reaction L-aspartyl-tRNA(Asn) + L-glutamine + ATP + H2O = L-asparaginyl-tRNA(Asn) + L-glutamate + ADP + phosphate + 2 H(+). Allows the formation of correctly charged Asn-tRNA(Asn) or Gln-tRNA(Gln) through the transamidation of misacylated Asp-tRNA(Asn) or Glu-tRNA(Gln) in organisms which lack either or both of asparaginyl-tRNA or glutaminyl-tRNA synthetases. The reaction takes place in the presence of glutamine and ATP through an activated phospho-Asp-tRNA(Asn) or phospho-Glu-tRNA(Gln). This is Aspartyl/glutamyl-tRNA(Asn/Gln) amidotransferase subunit C from Streptococcus agalactiae serotype Ia (strain ATCC 27591 / A909 / CDC SS700).